We begin with the raw amino-acid sequence, 437 residues long: MAGLNDVPFIKGLAVPSVCALIIFLGYASQFLFNYSTTLEPGPPTRRETIIFNGLLLVLWITYYRTVATDPGRYIFKDRVIEAEGQRWCNKCAAPKPPRAHHCRHCARCVPRMDHHCPWTRNCVSMTTFPHFLRFLIYTNMSLWMLGYFLWQRFSKIWEHRRLPAYLGPSFYGLICLSLISIVNFVTTVALGIMLINTVKSWVFNQTMIEGWEQERHEALMDKGPKEWWDIMGPDGEKVRFERLEFPYDIGFFSNMAQAMGTHNVLLWFFPFAGNPTVAKDGNGQGWTWEENGFNRIEGLWPPPDPDKLRRAARGWPAGNRNYAEELRQANMSSSEYKAGFLKRQADDEKRKRHLMAELEEVDDFDMYDDEEYDRELDQGLGWVNSDGDRLRDYGVDEEASEPEGVNDDDDDDDDDDVPLAELIRRRKILKKDGLDD.

Residues 1 to 12 (MAGLNDVPFIKG) are Cytoplasmic-facing. A helical transmembrane segment spans residues 13 to 33 (LAVPSVCALIIFLGYASQFLF). Over 34–48 (NYSTTLEPGPPTRRE) the chain is Lumenal. A helical membrane pass occupies residues 49–69 (TIIFNGLLLVLWITYYRTVAT). The Cytoplasmic segment spans residues 70 to 130 (DPGRYIFKDR…RNCVSMTTFP (61 aa)). A DHHC domain is found at 87 to 137 (RWCNKCAAPKPPRAHHCRHCARCVPRMDHHCPWTRNCVSMTTFPHFLRFLI). Cys-117 functions as the S-palmitoyl cysteine intermediate in the catalytic mechanism. The chain crosses the membrane as a helical span at residues 131–151 (HFLRFLIYTNMSLWMLGYFLW). Residues 152–173 (QRFSKIWEHRRLPAYLGPSFYG) are Lumenal-facing. A helical membrane pass occupies residues 174–194 (LICLSLISIVNFVTTVALGIM). Residues 195–437 (LINTVKSWVF…KILKKDGLDD (243 aa)) lie on the Cytoplasmic side of the membrane. The interval 377–419 (LDQGLGWVNSDGDRLRDYGVDEEASEPEGVNDDDDDDDDDDVP) is disordered. A compositionally biased stretch (acidic residues) spans 396–419 (VDEEASEPEGVNDDDDDDDDDDVP).

This sequence belongs to the DHHC palmitoyltransferase family. PFA4 subfamily.

It localises to the endoplasmic reticulum membrane. It catalyses the reaction L-cysteinyl-[protein] + hexadecanoyl-CoA = S-hexadecanoyl-L-cysteinyl-[protein] + CoA. Mediates the reversible addition of palmitate to target proteins, thereby regulating their membrane association and biological function. The sequence is that of Palmitoyltransferase PFA4 from Gibberella zeae (strain ATCC MYA-4620 / CBS 123657 / FGSC 9075 / NRRL 31084 / PH-1) (Wheat head blight fungus).